The following is a 273-amino-acid chain: 3-methyl-2-oxobutanoate hydroxymethyltransferase (273 aa).

Residues Asp-41 and Asp-80 each coordinate Mg(2+). 3-methyl-2-oxobutanoate is bound by residues 41-42 (DS), Asp-80, and Lys-110. Residue Glu-112 coordinates Mg(2+). Glu-180 serves as the catalytic Proton acceptor.

Belongs to the PanB family. Homodecamer; pentamer of dimers. Mg(2+) is required as a cofactor.

Its subcellular location is the cytoplasm. The enzyme catalyses 3-methyl-2-oxobutanoate + (6R)-5,10-methylene-5,6,7,8-tetrahydrofolate + H2O = 2-dehydropantoate + (6S)-5,6,7,8-tetrahydrofolate. Its pathway is cofactor biosynthesis; (R)-pantothenate biosynthesis; (R)-pantoate from 3-methyl-2-oxobutanoate: step 1/2. In terms of biological role, catalyzes the reversible reaction in which hydroxymethyl group from 5,10-methylenetetrahydrofolate is transferred onto alpha-ketoisovalerate to form ketopantoate. The chain is 3-methyl-2-oxobutanoate hydroxymethyltransferase from Deinococcus geothermalis (strain DSM 11300 / CIP 105573 / AG-3a).